We begin with the raw amino-acid sequence, 375 residues long: Trichodiene synthase (375 aa).

Belongs to the trichodiene synthase family.

It carries out the reaction (2E,6E)-farnesyl diphosphate = trichodiene + diphosphate. It functions in the pathway sesquiterpene biosynthesis; trichothecene biosynthesis. Functionally, TS is a member of the terpene cyclase group of enzymes. It catalyzes the isomerization and cyclization of farnesyl pyro-phosphate to form trichodiene, the first cyclic intermediate in the biosynthetic pathway for trichothecenes. It serves to branch trichothecene biosynthesis from the isoprenoid pathway. This chain is Trichodiene synthase (TRI5), found in Fusarium cortaderiae.